The primary structure comprises 253 residues: RNA polymerase sigma factor SigI6 (253 aa).

The short motif at 63-76 (EEYSVALLAFNEAI) is the Polymerase core binding element. A DNA-binding region (H-T-H motif) is located at residues 203–222 (TLELLKLAKVSRRTIERNKK).

This sequence belongs to the sigma-70 factor family. SigI subfamily. In terms of assembly, interacts with RsgI6.

It is found in the cytoplasm. Its activity is regulated as follows. Negatively regulated by the anti-sigma-I factor RsgI6. Binding of the polysaccharide substrate to RsgI6 may lead to the release and activation of SigI6. Sigma factors are initiation factors that promote the attachment of RNA polymerase to specific initiation sites and are then released. This sigma factor is involved in regulation of cellulosomal genes via an external polysaccharide-sensing mechanism. Recognizes the predicted promoters associated with sigI6 itself, xyn11B, xyn10D, xyn10Z, xyn10Y, cel9V, cseP, sigI1, cipA, and rsgI5. This is RNA polymerase sigma factor SigI6 from Acetivibrio thermocellus (strain ATCC 27405 / DSM 1237 / JCM 9322 / NBRC 103400 / NCIMB 10682 / NRRL B-4536 / VPI 7372) (Clostridium thermocellum).